The following is a 104-amino-acid chain: Transcription factor S (104 aa).

Cys-4, Cys-7, Cys-20, Cys-22, Cys-65, Cys-68, Cys-93, and Cys-96 together coordinate Zn(2+). The C4-type zinc-finger motif lies at 4 to 22 (CPKCGAVMFPSEGKFKCQC). Residues 61–101 (TRVECPKCGNMEAFWWLQQTRRADESETRFFRCTRCKHTWR) form a TFIIS-type zinc finger.

This sequence belongs to the archaeal RpoM/eukaryotic RPA12/RPB9/RPC11 RNA polymerase family.

Induces RNA cleavage activity in the RNA polymerase. In its presence, the cleavage activity of the RNA polymerase truncates the RNA back to position +15 in a stepwise manner by releasing mainly dinucleotides from the 3'-end of the nascent RNA. The truncated RNAs are able to continue elongation. Involved in transcriptional proofreading and fidelity. Misincorporation of nucleotides during elongation of transcription leads to arrested elongation complexes which are rescued by TFS-promoted removal of a dinucleotide from the 3'-end. TFS is able to induce a cleavage resynthesis cycle in stalled elongation complexes (resulting from the next missing nucleotide or a reduced incorporation rate of a wrong nucleotide) preventing misincorporation and enabling proofreading in a post-incorporation manner. Pausing of elongation complexes is the main determinant of TFS-induced RNA cleavage. The polypeptide is Transcription factor S (Methanothermobacter thermautotrophicus (strain ATCC 29096 / DSM 1053 / JCM 10044 / NBRC 100330 / Delta H) (Methanobacterium thermoautotrophicum)).